We begin with the raw amino-acid sequence, 50 residues long: Insulin-1 (50 aa).

3 disulfide bridges follow: cysteine 7-cysteine 36, cysteine 19-cysteine 49, and cysteine 35-cysteine 40.

Belongs to the insulin family. Heterodimer of a B chain and an A chain linked by two disulfide bonds.

Its subcellular location is the secreted. In terms of biological role, insulin decreases blood glucose concentration. It increases cell permeability to monosaccharides, amino acids and fatty acids. It accelerates glycolysis, the pentose phosphate cycle, and glycogen synthesis in liver. The sequence is that of Insulin-1 from Katsuwonus pelamis (Skipjack tuna).